A 201-amino-acid chain; its full sequence is Acyl-homoserine-lactone synthase (201 aa).

This sequence belongs to the autoinducer synthase family.

The enzyme catalyses a fatty acyl-[ACP] + S-adenosyl-L-methionine = an N-acyl-L-homoserine lactone + S-methyl-5'-thioadenosine + holo-[ACP] + H(+). In terms of biological role, required for the synthesis of BHL (N-butanoyl-L-homoserine lactone), and HHL (N-hexanoyl-L-homoserine lactone) autoinducer molecules which bind to RhlR and thus acts in elastase biosynthesis regulation. This is Acyl-homoserine-lactone synthase (rhlI) from Pseudomonas aeruginosa (strain ATCC 15692 / DSM 22644 / CIP 104116 / JCM 14847 / LMG 12228 / 1C / PRS 101 / PAO1).